A 252-amino-acid chain; its full sequence is Isoprenyl transferase (252 aa).

The active site involves Asp-32. Mg(2+) is bound at residue Asp-32. Residues 33-36, Trp-37, Arg-45, His-49, and 77-79 each bind substrate; these read GNGR and STE. Asn-80 acts as the Proton acceptor in catalysis. Substrate-binding positions include Trp-81, Arg-83, Arg-200, and 206–208; that span reads RLS. Glu-219 serves as a coordination point for Mg(2+).

This sequence belongs to the UPP synthase family. Homodimer. Mg(2+) is required as a cofactor.

Catalyzes the condensation of isopentenyl diphosphate (IPP) with allylic pyrophosphates generating different type of terpenoids. This Listeria monocytogenes serovar 1/2a (strain ATCC BAA-679 / EGD-e) protein is Isoprenyl transferase.